A 238-amino-acid chain; its full sequence is Aspartate/glutamate leucyltransferase (238 aa).

It belongs to the R-transferase family. Bpt subfamily.

Its subcellular location is the cytoplasm. The catalysed reaction is N-terminal L-glutamyl-[protein] + L-leucyl-tRNA(Leu) = N-terminal L-leucyl-L-glutamyl-[protein] + tRNA(Leu) + H(+). It carries out the reaction N-terminal L-aspartyl-[protein] + L-leucyl-tRNA(Leu) = N-terminal L-leucyl-L-aspartyl-[protein] + tRNA(Leu) + H(+). In terms of biological role, functions in the N-end rule pathway of protein degradation where it conjugates Leu from its aminoacyl-tRNA to the N-termini of proteins containing an N-terminal aspartate or glutamate. This Shewanella sp. (strain MR-7) protein is Aspartate/glutamate leucyltransferase.